The primary structure comprises 574 residues: Protein SIX6OS1 (574 aa).

The disordered stretch occupies residues 259-313 (KDEQVSNRSSQNSQLLLPCESQKFVRNMNSSEARVTDKKEESSANQSKFVRSDVR). The span at 264-275 (SNRSSQNSQLLL) shows a compositional bias: low complexity. Position 427 is a phosphothreonine (threonine 427). Serine 430 carries the phosphoserine modification. The disordered stretch occupies residues 549–574 (QDPSTMTSSSSKDFSSSQNKTQFMFF). Residues 552 to 565 (STMTSSSSKDFSSS) are compositionally biased toward low complexity.

In terms of assembly, interacts with SYCE1. Interacts with proteasome subunit PSMA8; to participate in meiosis progression during spermatogenesis. Most abundantly expressed in testis. Also expressed in retina and skeletal muscle.

Its subcellular location is the chromosome. Functionally, meiotic protein that localizes to the central element of the synaptonemal complex and is required for chromosome synapsis during meiotic recombination. Required for the appropriate processing of intermediate recombination nodules before crossover formation. This chain is Protein SIX6OS1 (Six6os1), found in Mus musculus (Mouse).